Reading from the N-terminus, the 82-residue chain is uncharacterized protein (82 aa).

Positions 29–38 are enriched in low complexity; it reads TATKSTSSGS. The disordered stretch occupies residues 29–64; that stretch reads TATKSTSSGSVPSFFTESTSTPLNQSKTNTSTLNKS. The segment covering 39 to 50 has biased composition (polar residues); sequence VPSFFTESTSTP. A compositionally biased stretch (low complexity) spans 51–64; the sequence is LNQSKTNTSTLNKS.

This is an uncharacterized protein from Dictyostelium discoideum (Social amoeba).